Here is a 372-residue protein sequence, read N- to C-terminus: Histidine protein methyltransferase 1 homolog (372 aa).

Disordered stretches follow at residues 30–55 and 68–103; these read SKEL…QFDL and NAAP…AKEH. Positions 39 to 49 are enriched in basic and acidic residues; sequence QKGEERDRKCS. A compositionally biased stretch (polar residues) spans 70–87; the sequence is APSQDTDSPLSAASSSRN. Ser-72 and Ser-77 each carry phosphoserine. His-154 carries the post-translational modification Tele-methylhistidine; by autocatalysis. S-adenosyl-L-methionine contacts are provided by residues 168–172, Gly-195, and 216–218; these read IWECT and QDY. The Nuclear localization signal motif lies at 247-253; it reads PDVKRCR. S-adenosyl-L-methionine-binding positions include 268 to 270 and Ser-293; that span reads GEW.

It belongs to the methyltransferase superfamily. METTL18 family. As to quaternary structure, interacts with GRWD1 and members of the heat shock protein 90 and 70 families; these proteins may possibly be methylation substrates for the enzyme. Post-translationally, monomethylated at His-154 through automethylation. Automethylation at His-154 positively regulates the methyltransferase activity toward RPL3. Probably methylated on other residues.

It is found in the cytoplasm. The protein localises to the cytosol. Its subcellular location is the nucleus. The protein resides in the nucleolus. The enzyme catalyses L-histidyl-[protein] + S-adenosyl-L-methionine = N(tele)-methyl-L-histidyl-[protein] + S-adenosyl-L-homocysteine + H(+). Its function is as follows. Protein-L-histidine N-tele-methyltransferase that specifically monomethylates RPL3, thereby regulating translation elongation. Histidine methylation of RPL3 regulates translation elongation by slowing ribosome traversal on tyrosine codons: slower elongation provides enough time for proper folding of synthesized proteins and prevents cellular aggregation of tyrosine-rich proteins. In Homo sapiens (Human), this protein is Histidine protein methyltransferase 1 homolog.